A 215-amino-acid chain; its full sequence is Ribosomal RNA small subunit methyltransferase G (215 aa).

Residues G77, F82, 130-131 (IE), and R146 each bind S-adenosyl-L-methionine.

This sequence belongs to the methyltransferase superfamily. RNA methyltransferase RsmG family.

Its subcellular location is the cytoplasm. It catalyses the reaction guanosine(527) in 16S rRNA + S-adenosyl-L-methionine = N(7)-methylguanosine(527) in 16S rRNA + S-adenosyl-L-homocysteine. Specifically methylates the N7 position of guanine in position 527 of 16S rRNA. This Bartonella quintana (strain Toulouse) (Rochalimaea quintana) protein is Ribosomal RNA small subunit methyltransferase G.